Here is a 78-residue protein sequence, read N- to C-terminus: Large ribosomal subunit protein bL28 (78 aa).

This sequence belongs to the bacterial ribosomal protein bL28 family.

The sequence is that of Large ribosomal subunit protein bL28 from Corynebacterium aurimucosum (strain ATCC 700975 / DSM 44827 / CIP 107346 / CN-1) (Corynebacterium nigricans).